A 123-amino-acid polypeptide reads, in one-letter code: Large ribosomal subunit protein uL18 (123 aa).

This sequence belongs to the universal ribosomal protein uL18 family. Part of the 50S ribosomal subunit; part of the 5S rRNA/L5/L18/L25 subcomplex. Contacts the 5S and 23S rRNAs.

Its function is as follows. This is one of the proteins that bind and probably mediate the attachment of the 5S RNA into the large ribosomal subunit, where it forms part of the central protuberance. The protein is Large ribosomal subunit protein uL18 of Chlamydia trachomatis serovar L2 (strain ATCC VR-902B / DSM 19102 / 434/Bu).